Here is a 312-residue protein sequence, read N- to C-terminus: MERALPAAGFLYWVGASTIAYLTLRASYSLFRAFQVWCVGNQAFVGPRLGEWAVVTGGTDGIGKSYAEELAKRGMKIVLISRSQDKLKEVSNNIKEKFNVETRTIAVDFSLDDIYDKIKTGLSGLEIGVLVNNVGMSYEYPEYFLEIPDLDNTIKKLININVLSICKVTRLVLPGMVERSKGVILNISSASGMLPVPLLTVYSATKAFVDFFSQCLHEEYKSKGIFVQSVLPFFVATKLAKIRKPTLDKPSAETFVKSAIKTVGLQTRTTGYVIHAIMGSINSILPRWIYFKTIMGFNKSLRNRYLKKTKKN.

A helical membrane pass occupies residues 4-24; sequence ALPAAGFLYWVGASTIAYLTL. 50–79 contacts NADP(+); sequence GEWAVVTGGTDGIGKSYAEELAKRGMKIVL. Transmembrane regions (helical) follow at residues 182 to 202 and 271 to 291; these read GVILNISSASGMLPVPLLTVY and GYVIHAIMGSINSILPRWIYF. Serine 189 provides a ligand contact to substrate. Tyrosine 202 serves as the catalytic Proton acceptor. Residues 308–312 carry the Di-lysine motif motif; that stretch reads KTKKN.

This sequence belongs to the short-chain dehydrogenases/reductases (SDR) family. 17-beta-HSD 3 subfamily.

The protein localises to the endoplasmic reticulum membrane. It carries out the reaction a very-long-chain (3R)-3-hydroxyacyl-CoA + NADP(+) = a very-long-chain 3-oxoacyl-CoA + NADPH + H(+). The catalysed reaction is 17beta-estradiol + NAD(+) = estrone + NADH + H(+). It catalyses the reaction 17beta-estradiol + NADP(+) = estrone + NADPH + H(+). The enzyme catalyses 3-oxooctadecanoyl-CoA + NADPH + H(+) = (3R)-hydroxyoctadecanoyl-CoA + NADP(+). It carries out the reaction (7Z,10Z,13Z,16Z)-3-oxodocosatetraenoyl-CoA + NADPH + H(+) = (3R)-hydroxy-(7Z,10Z,13Z,16Z)-docosatetraenoyl-CoA + NADP(+). The catalysed reaction is 3-oxo-(7Z,10Z,13Z,16Z,19Z)-docosapentaenoyl-CoA + NADPH + H(+) = (3R)-hydroxy-(7Z,10Z,13Z,16Z,19Z)-docosapentaenoyl-CoA + NADP(+). It catalyses the reaction (8Z,11Z,14Z)-3-oxoeicosatrienoyl-CoA + NADPH + H(+) = (3R)-hydroxy-(8Z,11Z,14Z)-eicosatrienoyl-CoA + NADP(+). The protein operates within lipid metabolism; fatty acid biosynthesis. Its pathway is steroid biosynthesis; estrogen biosynthesis. Functionally, catalyzes the second of the four reactions of the long-chain fatty acids elongation cycle. This endoplasmic reticulum-bound enzymatic process, allows the addition of two carbons to the chain of long- and very long-chain fatty acids/VLCFAs per cycle. This enzyme has a 3-ketoacyl-CoA reductase activity, reducing 3-ketoacyl-CoA to 3-hydroxyacyl-CoA, within each cycle of fatty acid elongation. Thereby, it may participate in the production of VLCFAs of different chain lengths that are involved in multiple biological processes as precursors of membrane lipids and lipid mediators. May also catalyze the transformation of estrone (E1) into estradiol (E2) and play a role in estrogen formation. The protein is Very-long-chain 3-oxoacyl-CoA reductase of Rattus norvegicus (Rat).